A 336-amino-acid chain; its full sequence is Foldase protein PrsA (336 aa).

The N-terminal stretch at 1–22 (MKSAKKLLSVLCLGIFILTFTA) is a signal peptide. Cys23 carries N-palmitoyl cysteine lipidation. Cys23 is lipidated: S-diacylglycerol cysteine. Positions 194–286 (PNTMNVSHIL…WGYHIIKVNS (93 aa)) constitute a PpiC domain.

It belongs to the PrsA family.

It is found in the cell membrane. The catalysed reaction is [protein]-peptidylproline (omega=180) = [protein]-peptidylproline (omega=0). Plays a major role in protein secretion by helping the post-translocational extracellular folding of several secreted proteins. The polypeptide is Foldase protein PrsA (Clostridium botulinum (strain ATCC 19397 / Type A)).